Here is a 596-residue protein sequence, read N- to C-terminus: DNA mismatch repair protein MutL (596 aa).

Belongs to the DNA mismatch repair MutL/HexB family.

Its function is as follows. This protein is involved in the repair of mismatches in DNA. It is required for dam-dependent methyl-directed DNA mismatch repair. May act as a 'molecular matchmaker', a protein that promotes the formation of a stable complex between two or more DNA-binding proteins in an ATP-dependent manner without itself being part of a final effector complex. This Leptospira borgpetersenii serovar Hardjo-bovis (strain JB197) protein is DNA mismatch repair protein MutL.